Consider the following 309-residue polypeptide: Porphobilinogen deaminase (309 aa).

Cys-241 is subject to S-(dipyrrolylmethanemethyl)cysteine.

The protein belongs to the HMBS family. As to quaternary structure, monomer. Dipyrromethane serves as cofactor.

It catalyses the reaction 4 porphobilinogen + H2O = hydroxymethylbilane + 4 NH4(+). Its pathway is porphyrin-containing compound metabolism; protoporphyrin-IX biosynthesis; coproporphyrinogen-III from 5-aminolevulinate: step 2/4. In terms of biological role, tetrapolymerization of the monopyrrole PBG into the hydroxymethylbilane pre-uroporphyrinogen in several discrete steps. This chain is Porphobilinogen deaminase, found in Geobacillus kaustophilus (strain HTA426).